Here is a 308-residue protein sequence, read N- to C-terminus: 1-acyl-sn-glycerol-3-phosphate acyltransferase (308 aa).

Transmembrane regions (helical) follow at residues 65–85 (FLSM…LLPW), 124–144 (AIYI…WLIP), and 148–168 (VTIA…YVLA). An HXXXXD motif motif is present at residues 130–135 (HASLVD).

This sequence belongs to the 1-acyl-sn-glycerol-3-phosphate acyltransferase family.

It localises to the membrane. It catalyses the reaction a 1-acyl-sn-glycero-3-phosphate + an acyl-CoA = a 1,2-diacyl-sn-glycero-3-phosphate + CoA. In terms of biological role, converts lysophosphatidic acid (LPA) into phosphatidic acid by incorporating acyl moiety at the 2 position. This enzyme shows a preference for medium-chain-length fatty acyl-coenzyme a substrates. This is 1-acyl-sn-glycerol-3-phosphate acyltransferase from Cocos nucifera (Coconut palm).